The sequence spans 165 residues: Lipoprotein signal peptidase (165 aa).

A run of 4 helical transmembrane segments spans residues 11 to 31, 41 to 61, 64 to 84, and 92 to 112; these read YWVLALAAIVLDQWSKWAVLS, VIPSFFDLTLVYNPGAAFSFL, QGGWQKYFFLVLAVAVSAYLV, and FATLGKTGAAMIIGGALGNVI. Catalysis depends on residues Asp122 and Asp140. The chain crosses the membrane as a helical span at residues 132 to 152; sequence FYPAFNIADSFICVGAVLAVL.

It belongs to the peptidase A8 family.

It is found in the cell inner membrane. It carries out the reaction Release of signal peptides from bacterial membrane prolipoproteins. Hydrolyzes -Xaa-Yaa-Zaa-|-(S,diacylglyceryl)Cys-, in which Xaa is hydrophobic (preferably Leu), and Yaa (Ala or Ser) and Zaa (Gly or Ala) have small, neutral side chains.. It functions in the pathway protein modification; lipoprotein biosynthesis (signal peptide cleavage). This protein specifically catalyzes the removal of signal peptides from prolipoproteins. The polypeptide is Lipoprotein signal peptidase (Neisseria meningitidis serogroup A / serotype 4A (strain DSM 15465 / Z2491)).